The chain runs to 460 residues: Ribosomal protein uS12 methylthiotransferase RimO (460 aa).

Residues 16-130 (NKIHFISLGC…ILSAIESKES (115 aa)) enclose the MTTase N-terminal domain. 6 residues coordinate [4Fe-4S] cluster: C25, C61, C93, C164, C168, and C171. Residues 150-382 (STPKHYAYLK…SQTQKKNVEK (233 aa)) form the Radical SAM core domain. The region spanning 385–455 (KQFVGKIVEA…GYDLVGRVVN (71 aa)) is the TRAM domain.

Belongs to the methylthiotransferase family. RimO subfamily. [4Fe-4S] cluster is required as a cofactor.

The protein resides in the cytoplasm. It carries out the reaction L-aspartate(89)-[ribosomal protein uS12]-hydrogen + (sulfur carrier)-SH + AH2 + 2 S-adenosyl-L-methionine = 3-methylsulfanyl-L-aspartate(89)-[ribosomal protein uS12]-hydrogen + (sulfur carrier)-H + 5'-deoxyadenosine + L-methionine + A + S-adenosyl-L-homocysteine + 2 H(+). In terms of biological role, catalyzes the methylthiolation of an aspartic acid residue of ribosomal protein uS12. This is Ribosomal protein uS12 methylthiotransferase RimO from Chlamydia abortus (strain DSM 27085 / S26/3) (Chlamydophila abortus).